The following is a 98-amino-acid chain: Citrate lyase acyl carrier protein (98 aa).

Ser14 bears the O-(phosphoribosyl dephospho-coenzyme A)serine mark.

This sequence belongs to the CitD family. As to quaternary structure, oligomer with a subunit composition of (alpha,beta,gamma)6.

The protein resides in the cytoplasm. Functionally, covalent carrier of the coenzyme of citrate lyase. This chain is Citrate lyase acyl carrier protein, found in Salmonella arizonae (strain ATCC BAA-731 / CDC346-86 / RSK2980).